Here is a 670-residue protein sequence, read N- to C-terminus: FAD-binding monooxygenase ausC (670 aa).

Residues threonine 144–tryptophan 147, aspartate 156–threonine 157, and tyrosine 162 each bind FAD. Residue methionine 154–aspartate 156 participates in NADP(+) binding. NADP(+) contacts are provided by residues threonine 299 to glutamine 305 and arginine 322 to threonine 323.

It belongs to the FAD-binding monooxygenase family. The cofactor is FAD.

It carries out the reaction preaustinoid A + AH2 + O2 = preaustinoid A1 + A + H2O. It functions in the pathway secondary metabolite biosynthesis; terpenoid biosynthesis. Its function is as follows. FAD-binding monooxygenase; part of the gene cluster that mediates the biosynthesis of calidodehydroaustin, a fungal meroterpenoid. The first step of the pathway is the synthesis of 3,5-dimethylorsellinic acid by the polyketide synthase ausA. 3,5-dimethylorsellinic acid is then prenylated by the polyprenyl transferase ausN. Further epoxidation by the FAD-dependent monooxygenase ausM and cyclization by the probable terpene cyclase ausL lead to the formation of protoaustinoid A. Protoaustinoid A is then oxidized to spiro-lactone preaustinoid A3 by the combined action of the FAD-binding monooxygenases ausB and ausC, and the dioxygenase ausE. Acid-catalyzed keto-rearrangement and ring contraction of the tetraketide portion of preaustinoid A3 by ausJ lead to the formation of preaustinoid A4. The aldo-keto reductase ausK, with the help of ausH, is involved in the next step by transforming preaustinoid A4 into isoaustinone which is in turn hydroxylated by the P450 monooxygenase ausI to form austinolide. The cytochrome P450 monooxygenase ausG modifies austinolide to austinol. Austinol is further acetylated to austin by the O-acetyltransferase ausP, which spontaneously changes to dehydroaustin. The cytochrome P450 monooxygenase ausR then converts dehydroaustin is into 7-dehydrodehydroaustin. The hydroxylation catalyzed by ausR permits the O-acetyltransferase ausQ to add an additional acetyl group to the molecule, leading to the formation of acetoxydehydroaustin. The short chain dehydrogenase ausT catalyzes the reduction of the double bond present between carbon atoms 1 and 2 to convert 7-dehydrodehydroaustin into 1,2-dihydro-7-hydroxydehydroaustin. AusQ catalyzes not only an acetylation reaction but also the addition of the PKS ausV diketide product to 1,2-dihydro-7-hydroxydehydroaustin, forming precalidodehydroaustin. Finally, the iron/alpha-ketoglutarate-dependent dioxygenase converts precalidodehydroaustin into calidodehydroaustin. This chain is FAD-binding monooxygenase ausC, found in Aspergillus calidoustus.